The sequence spans 898 residues: Metalloprotease StcE (898 aa).

The signal sequence occupies residues 1 to 35 (MNTKMNERWRTPMKLKYLSCTILAPLAIGVFSATA). In terms of domain architecture, Peptidase M66 spans 296-551 (ELLLHTIDIG…QRFFENKAVF (256 aa)). Position 446 (His446) interacts with Zn(2+). The active site involves Glu447. Zn(2+) is bound by residues His450 and His456.

Zn(2+) is required as a cofactor.

The protein resides in the secreted. Its activity is regulated as follows. Inhibited by divalent cation chelators such as BPS and EDTA. Its function is as follows. Virulence factor that contributes to intimate adherence of enterohemorrhagic E.coli (EHEC) O157:H7 to host cells. Is able to cleave the secreted human mucin 7 (MUC7) and the glycoprotein 340 (DMBT1/GP340). Also cleaves human C1 inhibitor (SERPING1), a regulator of multiple inflammatory pathways, and binds and localizes it to bacterial and host cell surfaces, protecting them from complement-mediated lysis. Therefore, the current model proposes two roles for StcE during infection: it acts first as a mucinase, allowing passage of EHEC through the oral cavity by cleaving the salivary glycoproteins that are responsible for bacterial aggregation. Similarly, in the colon, StcE cleaves the glycoproteins that protect the intestinal epithelial surface, allowing EHEC to come into close contact with host cell membranes. Secondly, it acts as an anti-inflammatory agent by localizing SERPING1 to cell membranes. This Escherichia coli O157:H7 protein is Metalloprotease StcE (stcE).